Reading from the N-terminus, the 666-residue chain is Chaperone protein HtpG (666 aa).

The a; substrate-binding stretch occupies residues Met1–Arg374. The segment at Glu375 to Gln593 is b. The tract at residues Met594–Arg666 is c.

This sequence belongs to the heat shock protein 90 family. Homodimer.

Its subcellular location is the cytoplasm. Functionally, molecular chaperone. Has ATPase activity. The chain is Chaperone protein HtpG from Psychrobacter cryohalolentis (strain ATCC BAA-1226 / DSM 17306 / VKM B-2378 / K5).